The sequence spans 183 residues: Glutathione-regulated potassium-efflux system ancillary protein KefG (183 aa).

It belongs to the NAD(P)H dehydrogenase (quinone) family. KefG subfamily. In terms of assembly, interacts with KefB.

It is found in the cell inner membrane. The enzyme catalyses a quinone + NADH + H(+) = a quinol + NAD(+). It catalyses the reaction a quinone + NADPH + H(+) = a quinol + NADP(+). Regulatory subunit of a potassium efflux system that confers protection against electrophiles. Required for full activity of KefB. The sequence is that of Glutathione-regulated potassium-efflux system ancillary protein KefG from Escherichia coli O6:K15:H31 (strain 536 / UPEC).